A 246-amino-acid chain; its full sequence is tRNA1(Val) (adenine(37)-N6)-methyltransferase (246 aa).

It belongs to the methyltransferase superfamily. tRNA (adenine-N(6)-)-methyltransferase family.

Its subcellular location is the cytoplasm. The enzyme catalyses adenosine(37) in tRNA1(Val) + S-adenosyl-L-methionine = N(6)-methyladenosine(37) in tRNA1(Val) + S-adenosyl-L-homocysteine + H(+). Specifically methylates the adenine in position 37 of tRNA(1)(Val) (anticodon cmo5UAC). This is tRNA1(Val) (adenine(37)-N6)-methyltransferase from Shewanella halifaxensis (strain HAW-EB4).